A 290-amino-acid chain; its full sequence is tRNA-cytidine(32) 2-sulfurtransferase (290 aa).

The short motif at 66–71 (SGGKDS) is the PP-loop motif element. [4Fe-4S] cluster contacts are provided by Cys141, Cys144, and Cys232.

Belongs to the TtcA family. Homodimer. Mg(2+) serves as cofactor. [4Fe-4S] cluster is required as a cofactor.

The protein localises to the cytoplasm. It carries out the reaction cytidine(32) in tRNA + S-sulfanyl-L-cysteinyl-[cysteine desulfurase] + AH2 + ATP = 2-thiocytidine(32) in tRNA + L-cysteinyl-[cysteine desulfurase] + A + AMP + diphosphate + H(+). Its pathway is tRNA modification. Functionally, catalyzes the ATP-dependent 2-thiolation of cytidine in position 32 of tRNA, to form 2-thiocytidine (s(2)C32). The sulfur atoms are provided by the cysteine/cysteine desulfurase (IscS) system. In Rhizobium etli (strain ATCC 51251 / DSM 11541 / JCM 21823 / NBRC 15573 / CFN 42), this protein is tRNA-cytidine(32) 2-sulfurtransferase.